The primary structure comprises 485 residues: Cysteine protease atg4da (485 aa).

The tract at residues 22-46 is disordered; sequence ASASSKRHLGHGAVPDGIREGSGEP. Cys131 serves as the catalytic Nucleophile. Active-site residues include Asp368 and His370.

This sequence belongs to the peptidase C54 family.

Its subcellular location is the cytoplasm. The enzyme catalyses [protein]-C-terminal L-amino acid-glycyl-phosphatidylethanolamide + H2O = [protein]-C-terminal L-amino acid-glycine + a 1,2-diacyl-sn-glycero-3-phosphoethanolamine. The catalysed reaction is [protein]-C-terminal L-amino acid-glycyl-phosphatidylserine + H2O = [protein]-C-terminal L-amino acid-glycine + a 1,2-diacyl-sn-glycero-3-phospho-L-serine. Cysteine protease that plays a key role in autophagy by mediating both proteolytic activation and delipidation of ATG8 family proteins. The protease activity is required for proteolytic activation of ATG8 family proteins to reveal a C-terminal glycine. Exposure of the glycine at the C-terminus is essential for ATG8 proteins conjugation to phosphatidylethanolamine (PE) and insertion to membranes, which is necessary for autophagy. In addition to the protease activity, also mediates delipidation of ATG8 family proteins. Catalyzes delipidation of PE-conjugated forms of ATG8 proteins during macroautophagy. Also involved in non-canonical autophagy, a parallel pathway involving conjugation of ATG8 proteins to single membranes at endolysosomal compartments, by catalyzing delipidation of ATG8 proteins conjugated to phosphatidylserine (PS). ATG4D plays a role in the autophagy-mediated neuronal homeostasis in the central nervous system. The protein is Cysteine protease atg4da of Danio rerio (Zebrafish).